The following is a 452-amino-acid chain: Tripartite motif-containing protein 49 (452 aa).

The segment at 15 to 56 adopts an RING-type zinc-finger fold; that stretch reads CPLCMNYFIDPVTIDCGHSFCRPCFYLNWQDIPFLVQCSECT. The B box-type zinc-finger motif lies at 88–129; the sequence is SEEQMCGTHRETKKIFCEVDRSLLCLLCSSSQEHRYHRHRPI. Positions 93, 96, 115, and 121 each coordinate Zn(2+). A B30.2/SPRY domain is found at 269–452; that stretch reads ELSAGPITGL…LRPIFCCIHF (184 aa).

It belongs to the TRIM/RBCC family. In terms of tissue distribution, preferentially expressed in testis.

This is Tripartite motif-containing protein 49 (TRIM49) from Homo sapiens (Human).